The primary structure comprises 711 residues: Double-stranded RNA-specific editase 1 (711 aa).

The interval 1 to 78 (MDIEDEENMS…KRRKTPGPVL (78 aa)) is disordered. Residues 63–73 (SKYRLKKRRKT) are compositionally biased toward basic residues. The 67-residue stretch at 78-144 (LPKNALMQLN…AEKALRSFVQ (67 aa)) folds into the DRBM 1 domain. Interaction with substrate RNA stretches follow at residues 83–88 (LMQLNE) and 104–105 (VH). Residue serine 149 is modified to Phosphoserine. Positions 176 to 220 (LFNGFETPDKSEPPFYVGSNGDDSFSSSGDVSLSASPVPASLTQP) are disordered. Residues 192-213 (VGSNGDDSFSSSGDVSLSASPV) are compositionally biased toward low complexity. Residues 231–298 (PSGKNPVMIL…AQSALATVFN (68 aa)) enclose the DRBM 2 domain. Interaction with substrate RNA stretches follow at residues 237–242 (VMILNE) and histidine 259. The 338-residue stretch at 370–707 (SVSTGTKCIN…VEKPTEQDQF (338 aa)) folds into the A to I editase domain. Histidine 394 serves as a coordination point for Zn(2+). Catalysis depends on glutamate 396, which acts as the Proton donor. The 1D-myo-inositol hexakisphosphate site is built by arginine 400 and arginine 401. Zn(2+) contacts are provided by cysteine 451 and cysteine 526. Lysine 529, arginine 532, lysine 639, lysine 672, lysine 682, and lysine 700 together coordinate 1D-myo-inositol hexakisphosphate.

Homodimer. Homodimerization is essential for its catalytic activity. Can form heterodimers with isoform 5 of ADAR/ADAR1. Requires 1D-myo-inositol hexakisphosphate as cofactor.

The protein localises to the nucleus. It is found in the nucleolus. The enzyme catalyses adenosine in double-stranded RNA + H2O + H(+) = inosine in double-stranded RNA + NH4(+). Its function is as follows. Catalyzes the hydrolytic deamination of adenosine to inosine in double-stranded RNA (dsRNA) referred to as A-to-I RNA editing. This may affect gene expression and function in a number of ways that include mRNA translation by changing codons and hence the amino acid sequence of proteins; pre-mRNA splicing by altering splice site recognition sequences; RNA stability by changing sequences involved in nuclease recognition; genetic stability in the case of RNA virus genomes by changing sequences during viral RNA replication; and RNA structure-dependent activities such as microRNA production or targeting or protein-RNA interactions. Can edit both viral and cellular RNAs and can edit RNAs at multiple sites (hyper-editing) or at specific sites (site-specific editing). Its cellular RNA substrates include: bladder cancer-associated protein (BLCAP), neurotransmitter receptors for glutamate (GRIA2 and GRIK2) and serotonin (HTR2C), GABA receptor (GABRA3) and potassium voltage-gated channel (KCNA1). Site-specific RNA editing of transcripts encoding these proteins results in amino acid substitutions which consequently alter their functional activities. Edits GRIA2 at both the Q/R and R/G sites efficiently but converts the adenosine in hotspot1 much less efficiently. Can inhibit cell proliferation and migration and can stimulate exocytosis. In Mus musculus (Mouse), this protein is Double-stranded RNA-specific editase 1 (Adarb1).